A 500-amino-acid chain; its full sequence is Probable cytosol aminopeptidase (500 aa).

Mn(2+) is bound by residues lysine 265 and aspartate 270. Lysine 277 is an active-site residue. Mn(2+) is bound by residues aspartate 288, aspartate 347, and glutamate 349. Arginine 351 is an active-site residue.

It belongs to the peptidase M17 family. Mn(2+) is required as a cofactor.

Its subcellular location is the cytoplasm. It catalyses the reaction Release of an N-terminal amino acid, Xaa-|-Yaa-, in which Xaa is preferably Leu, but may be other amino acids including Pro although not Arg or Lys, and Yaa may be Pro. Amino acid amides and methyl esters are also readily hydrolyzed, but rates on arylamides are exceedingly low.. It carries out the reaction Release of an N-terminal amino acid, preferentially leucine, but not glutamic or aspartic acids.. Presumably involved in the processing and regular turnover of intracellular proteins. Catalyzes the removal of unsubstituted N-terminal amino acids from various peptides. The protein is Probable cytosol aminopeptidase of Bdellovibrio bacteriovorus (strain ATCC 15356 / DSM 50701 / NCIMB 9529 / HD100).